Consider the following 158-residue polypeptide: Protein-export protein SecB (158 aa).

The protein belongs to the SecB family. Homotetramer, a dimer of dimers. One homotetramer interacts with 1 SecA dimer.

Its subcellular location is the cytoplasm. One of the proteins required for the normal export of preproteins out of the cell cytoplasm. It is a molecular chaperone that binds to a subset of precursor proteins, maintaining them in a translocation-competent state. It also specifically binds to its receptor SecA. This Rhodopseudomonas palustris (strain HaA2) protein is Protein-export protein SecB.